A 245-amino-acid chain; its full sequence is 14-3-3 protein zeta (245 aa).

This sequence belongs to the 14-3-3 family. As to quaternary structure, homodimer.

It is found in the cytoplasm. Adapter protein implicated in the regulation of a large spectrum of both general and specialized signaling pathways. Binds to a large number of partners, usually by recognition of a phosphoserine or phosphothreonine motif. Binding generally results in the modulation of the activity of the binding partner. The protein is 14-3-3 protein zeta (ywhaz) of Xenopus tropicalis (Western clawed frog).